The chain runs to 121 residues: Large ribosomal subunit protein uL14 (121 aa).

The protein belongs to the universal ribosomal protein uL14 family. In terms of assembly, part of the 50S ribosomal subunit. Forms a cluster with proteins L3 and L19. In the 70S ribosome, L14 and L19 interact and together make contacts with the 16S rRNA in bridges B5 and B8.

Binds to 23S rRNA. Forms part of two intersubunit bridges in the 70S ribosome. The sequence is that of Large ribosomal subunit protein uL14 from Aquifex aeolicus (strain VF5).